Reading from the N-terminus, the 600-residue chain is MSETRKDTDRASAQLPTKCQLPERVAVIGAGPVGCLAALAFAQRGCKVDIFESRPDPRTHEAITRASQRSINLALSTRGITGLRSVSLAGLGVGTNAPNGMDLADLVLQNSVPMRARMIHVVTRQASATQAAEVKEISQLYSTKGESINSVDRGRLNNILLEHALMHRNVEVHFEHKLQSVDFDHDIKSAAKRAGTPPPAIDASANKWLRGANVTGGDSCADEPSGCGGRKQATTKSQGSEYVAPAGTSAVDRVRLDFDVHSTNQHIRKTSNTHYASFVVGCDGAHSSIRSAMGSLIRMHYTHNYIDTGYIELSIPPRTSLGSGSRIRGSGGVDGKRGGHDAFHLDANHLHIWPRHSFMLIALPNLDGSFTCTLFAPFKMFASELSTKEGIVAVFQQHFPDALALIDEEKLVKCLTTRRASALGSVQCDPYHYKDRAVLIGDAAHAMLPFYGQGLNCGFEDVRVMFDIIDQHESLQVALDLYTKERHPDLVAILQLAEQNYREMAHSVVSWPYLLRKKLDGLLMSILPSSMWSSLYAMTTFSNLPYSRVVKTEKRQQAIIGHALVATAVAFVSAAAVGVYSTRALWQPVTVRCIARLHNS.

The interval 217-242 (GDSCADEPSGCGGRKQATTKSQGSEY) is disordered.

Belongs to the aromatic-ring hydroxylase family. KMO subfamily. The cofactor is FAD.

It is found in the mitochondrion outer membrane. It carries out the reaction L-kynurenine + NADPH + O2 + H(+) = 3-hydroxy-L-kynurenine + NADP(+) + H2O. It participates in cofactor biosynthesis; NAD(+) biosynthesis; quinolinate from L-kynurenine: step 1/3. In terms of biological role, catalyzes the hydroxylation of L-kynurenine (L-Kyn) to form 3-hydroxy-L-kynurenine (L-3OHKyn). Required for synthesis of quinolinic acid. The chain is Kynurenine 3-monooxygenase from Mycosarcoma maydis (Corn smut fungus).